The sequence spans 233 residues: Endonuclease V (233 aa).

Mg(2+) contacts are provided by Asp-48 and Asp-116.

It belongs to the endonuclease V family. It depends on Mg(2+) as a cofactor.

Its subcellular location is the cytoplasm. The enzyme catalyses Endonucleolytic cleavage at apurinic or apyrimidinic sites to products with a 5'-phosphate.. Its function is as follows. DNA repair enzyme involved in the repair of deaminated bases. Selectively cleaves double-stranded DNA at the second phosphodiester bond 3' to a deoxyinosine leaving behind the intact lesion on the nicked DNA. The chain is Endonuclease V from Streptomyces coelicolor (strain ATCC BAA-471 / A3(2) / M145).